A 130-amino-acid polypeptide reads, in one-letter code: Small ribosomal subunit protein uS8 (130 aa).

The protein belongs to the universal ribosomal protein uS8 family. In terms of assembly, part of the 30S ribosomal subunit.

One of the primary rRNA binding proteins, it binds directly to 16S rRNA central domain where it helps coordinate assembly of the platform of the 30S subunit. The sequence is that of Small ribosomal subunit protein uS8 from Thermococcus gammatolerans (strain DSM 15229 / JCM 11827 / EJ3).